Reading from the N-terminus, the 270-residue chain is 1-deoxy-11-beta-hydroxypentalenate dehydrogenase (270 aa).

Residue 12 to 36 coordinates NAD(+); it reads GAASGIGFALSARLAQAGARVVMTD. Serine 144 contacts substrate. Tyrosine 157 serves as the catalytic Proton acceptor. Lysine 161 is a binding site for NAD(+).

It belongs to the short-chain dehydrogenases/reductases (SDR) family.

It carries out the reaction 1-deoxy-11beta-hydroxypentalenate + NAD(+) = 1-deoxy-11-oxopentalenate + NADH + H(+). It functions in the pathway antibiotic biosynthesis; neopentalenolactone biosynthesis. Functionally, catalyzes the oxidation of 1-deoxy-11-beta-hydroxypentalenic acid to 1-deoxy-11-oxopentalenic acid in the biosynthesis of neopentalenolactone antibiotic. The sequence is that of 1-deoxy-11-beta-hydroxypentalenate dehydrogenase (ptlF) from Streptomyces avermitilis (strain ATCC 31267 / DSM 46492 / JCM 5070 / NBRC 14893 / NCIMB 12804 / NRRL 8165 / MA-4680).